The following is a 549-amino-acid chain: Probable protein kinase UbiB (549 aa).

One can recognise a Protein kinase domain in the interval 123–501 (DFNETPLASA…QQQAHKSNYL (379 aa)). Residues 129-137 (LASASISQV) and Lys152 contribute to the ATP site. The active-site Proton acceptor is the Asp287. Transmembrane regions (helical) follow at residues 498 to 518 (SNYL…LFNQ) and 520 to 540 (ATLW…IIGW).

It belongs to the ABC1 family. UbiB subfamily.

It is found in the cell inner membrane. It functions in the pathway cofactor biosynthesis; ubiquinone biosynthesis [regulation]. Functionally, is probably a protein kinase regulator of UbiI activity which is involved in aerobic coenzyme Q (ubiquinone) biosynthesis. This Shewanella sp. (strain MR-4) protein is Probable protein kinase UbiB.